The primary structure comprises 832 residues: SID1 transmembrane family member 2 (832 aa).

An N-terminal signal peptide occupies residues 1-18; sequence MIAWRLPLCVLLVASVES. Residues 19-293 lie on the Extracellular side of the membrane; sequence HLGALGPKNV…VSQAVTSEAY (275 aa). 6 N-linked (GlcNAc...) asparagine glycosylation sites follow: Asn-27, Asn-54, Asn-60, Asn-123, Asn-141, and Asn-165. The chain crosses the membrane as a helical span at residues 294-314; that stretch reads VGGMLFCLGIFLSFYLLTVLL. The Cytoplasmic segment spans residues 315–447; sequence ACWENWRQRK…DKRVLRKKYQ (133 aa). 3 positions are modified to phosphoserine: Ser-401, Ser-403, and Ser-404. Residues 448–468 form a helical membrane-spanning segment; it reads IYFWNIATIAVFYALPVVQLV. Over 469–499 the chain is Extracellular; it reads ITYQTVVNVTGNQDICYYNFLCAHPLGNLSA. N-linked (GlcNAc...) asparagine glycosylation is found at Asn-476 and Asn-496. The helical transmembrane segment at 500-520 threads the bilayer; it reads FNNILSNLGYILLGLLFLLII. Over 521–546 the chain is Cytoplasmic; the sequence is LQREINHNRALLRNDLYALECGIPKH. Residues 547 to 567 form a helical membrane-spanning segment; it reads FGLFYAMGTALMMEGLLSACY. Residues 568 to 605 lie on the Extracellular side of the membrane; sequence HVCPNYTNFQFDTSFMYMIAGLCMLKLYQKRHPDINAS. N-linked (GlcNAc...) asparagine glycans are attached at residues Asn-572 and Asn-603. Residues 606–626 traverse the membrane as a helical segment; sequence AYSAYACLAIVIFFSVLGVVF. At 627-631 the chain is on the cytoplasmic side; it reads GKGNT. Residues 632-652 traverse the membrane as a helical segment; it reads AFWIVFSVIHIISTLLLSTQL. The Extracellular segment spans residues 653–688; sequence YYMGRWKLDSGIFRRILHVLYTDCIRQCSGPLYTDR. The helical transmembrane segment at 689-709 threads the bilayer; it reads MVLLVMGNIINWSLAAYGLIM. Over 710 to 715 the chain is Cytoplasmic; it reads RPNDFA. A helical transmembrane segment spans residues 716–736; that stretch reads SYLLAIGICNLLLYFAFYIIM. The Extracellular segment spans residues 737-746; sequence KLRSGERIKL. The chain crosses the membrane as a helical span at residues 747 to 767; sequence IPLLCIVCTSVVWGFALFFFF. Residues 768-796 are Cytoplasmic-facing; it reads QGLSTWQKTPAESREHNRDCILLDFFDDH. Residues 797-817 form a helical membrane-spanning segment; sequence DIWHFLSSIAMFGSFLVLLTL. Over 818 to 832 the chain is Extracellular; the sequence is DDDLDTVQRDKIYVF.

The protein belongs to the SID1 family. In terms of assembly, interacts with adapter protein complex 1 (AP-1) and AP-2, but not AP-3 and AP-4. Interacts with LAMP2. Post-translationally, glycosylated. As to expression, widely expressed, including in the liver, brain and kidney (at protein level).

The protein localises to the lysosome membrane. It is found in the cell membrane. In terms of biological role, mediates the translocation of RNA and DNA across the lysosomal membrane during RNA and DNA autophagy (RDA), a process in which RNA and DNA is directly imported into lysosomes in an ATP-dependent manner, and degraded. Involved in the uptake of single-stranded oligonucleotides by living cells, a process called gymnosis. In vitro, mediates the uptake of linear DNA more efficiently than that of circular DNA, but exhibits similar uptake efficacy toward RNA and DNA. Binds long double-stranded RNA (dsRNA) (500 - 700 base pairs), but not dsRNA shorter than 100 bp. The polypeptide is SID1 transmembrane family member 2 (Sidt2) (Mus musculus (Mouse)).